The sequence spans 340 residues: Phosphate acyltransferase (340 aa).

It belongs to the PlsX family. In terms of assembly, homodimer. Probably interacts with PlsY.

Its subcellular location is the cytoplasm. It carries out the reaction a fatty acyl-[ACP] + phosphate = an acyl phosphate + holo-[ACP]. Its pathway is lipid metabolism; phospholipid metabolism. Functionally, catalyzes the reversible formation of acyl-phosphate (acyl-PO(4)) from acyl-[acyl-carrier-protein] (acyl-ACP). This enzyme utilizes acyl-ACP as fatty acyl donor, but not acyl-CoA. This Pseudomonas savastanoi pv. phaseolicola (strain 1448A / Race 6) (Pseudomonas syringae pv. phaseolicola (strain 1448A / Race 6)) protein is Phosphate acyltransferase.